The sequence spans 546 residues: Pyrophosphate--fructose 6-phosphate 1-phosphotransferase (546 aa).

Position 80 (Gly80) interacts with diphosphate. Asp174 contributes to the Mg(2+) binding site. Residues 202–204 (TID), 241–242 (KY), 249–251 (MGR), Glu310, and 420–423 (YEGR) contribute to the substrate site. Asp204 functions as the Proton acceptor in the catalytic mechanism.

Belongs to the phosphofructokinase type A (PFKA) family. PPi-dependent PFK group II subfamily. Clade 'Long' sub-subfamily. As to quaternary structure, homodimer. Mg(2+) serves as cofactor. Requires Mn(2+) as cofactor.

The protein localises to the cytoplasm. The enzyme catalyses beta-D-fructose 6-phosphate + diphosphate = beta-D-fructose 1,6-bisphosphate + phosphate + H(+). Its pathway is carbohydrate degradation; glycolysis; D-glyceraldehyde 3-phosphate and glycerone phosphate from D-glucose: step 3/4. Non-allosteric. Competitively inhibited by PPi, Pi and fructose 1,6-bisphosphate. Functionally, catalyzes the phosphorylation of D-fructose 6-phosphate, the first committing step of glycolysis. Uses inorganic phosphate (PPi) as phosphoryl donor instead of ATP like common ATP-dependent phosphofructokinases (ATP-PFKs), which renders the reaction reversible, and can thus function both in glycolysis and gluconeogenesis. Consistently, PPi-PFK can replace the enzymes of both the forward (ATP-PFK) and reverse (fructose-bisphosphatase (FBPase)) reactions. This is Pyrophosphate--fructose 6-phosphate 1-phosphotransferase from Entamoeba histolytica (strain ATCC 30459 / HM-1:IMSS / ABRM).